The chain runs to 354 residues: UDP-3-O-acylglucosamine N-acyltransferase (354 aa).

The active-site Proton acceptor is H258.

This sequence belongs to the transferase hexapeptide repeat family. LpxD subfamily. In terms of assembly, homotrimer.

The enzyme catalyses a UDP-3-O-[(3R)-3-hydroxyacyl]-alpha-D-glucosamine + a (3R)-hydroxyacyl-[ACP] = a UDP-2-N,3-O-bis[(3R)-3-hydroxyacyl]-alpha-D-glucosamine + holo-[ACP] + H(+). It participates in bacterial outer membrane biogenesis; LPS lipid A biosynthesis. In terms of biological role, catalyzes the N-acylation of UDP-3-O-acylglucosamine using 3-hydroxyacyl-ACP as the acyl donor. Is involved in the biosynthesis of lipid A, a phosphorylated glycolipid that anchors the lipopolysaccharide to the outer membrane of the cell. This chain is UDP-3-O-acylglucosamine N-acyltransferase, found in Sinorhizobium medicae (strain WSM419) (Ensifer medicae).